Consider the following 539-residue polypeptide: Phosphoenolpyruvate carboxykinase (ATP) (539 aa).

Arg64, Tyr206, and Lys212 together coordinate substrate. Residues Lys212, His231, and 247–255 (GLSGTGKTT) contribute to the ATP site. Residues Lys212 and His231 each contribute to the Mn(2+) site. Asp268 contacts Mn(2+). ATP-binding positions include Glu296, Arg332, 448–449 (RI), and Thr454. Arg332 is a substrate binding site.

Belongs to the phosphoenolpyruvate carboxykinase (ATP) family. In terms of assembly, monomer. Requires Mn(2+) as cofactor.

The protein localises to the cytoplasm. It carries out the reaction oxaloacetate + ATP = phosphoenolpyruvate + ADP + CO2. It functions in the pathway carbohydrate biosynthesis; gluconeogenesis. Functionally, involved in the gluconeogenesis. Catalyzes the conversion of oxaloacetate (OAA) to phosphoenolpyruvate (PEP) through direct phosphoryl transfer between the nucleoside triphosphate and OAA. The polypeptide is Phosphoenolpyruvate carboxykinase (ATP) (Pectobacterium carotovorum subsp. carotovorum (strain PC1)).